The following is a 181-amino-acid chain: Ribosome maturation factor RimM (181 aa).

The 75-residue stretch at 98-172 (EDEFYFEDLI…RIVIPELSLW (75 aa)) folds into the PRC barrel domain.

It belongs to the RimM family. Binds ribosomal protein uS19.

The protein localises to the cytoplasm. Its function is as follows. An accessory protein needed during the final step in the assembly of 30S ribosomal subunit, possibly for assembly of the head region. Essential for efficient processing of 16S rRNA. May be needed both before and after RbfA during the maturation of 16S rRNA. It has affinity for free ribosomal 30S subunits but not for 70S ribosomes. The polypeptide is Ribosome maturation factor RimM (Hyphomonas neptunium (strain ATCC 15444)).